The chain runs to 375 residues: ORC1-type DNA replication protein 3 (375 aa).

ATP contacts are provided by residues 66-70 (TGKTT), Tyr209, and Arg221.

Belongs to the CDC6/cdc18 family.

In terms of biological role, involved in regulation of DNA replication. This chain is ORC1-type DNA replication protein 3 (cdc6c), found in Haloarcula marismortui (strain ATCC 43049 / DSM 3752 / JCM 8966 / VKM B-1809) (Halobacterium marismortui).